The chain runs to 451 residues: Protein naked cuticle homolog 2 (451 aa).

Residues M1 to N108 are disordered. Residue G2 is the site of N-myristoyl glycine attachment. Residues G2 to L173 form a targeting to the basolateral cell membrane region. Composition is skewed to basic and acidic residues over residues K34–Q63 and D89–P99. Positions Q113–E178 are interaction with DVL1, DVL2 and DVL3. Residues E119–V154 form the EF-hand domain. Residues D132, D134, K138, and D143 each coordinate Ca(2+). Disordered stretches follow at residues S162–V237 and Y256–H408. Basic and acidic residues predominate over residues S180 to L215. The interaction with TGFA stretch occupies residues Q300–Y385. Positions K332–K351 are enriched in low complexity.

It belongs to the NKD family. As to quaternary structure, interacts with DVL1, DVL2, DVL3 and PPP2R3A. Interacts with RNF25 and TGFA (via cytoplasmic domain). Post-translationally, ubiquitinated, leading to rapid proteasomal degradation. Interaction with TGFA interferes with RNF25 binding and protects against ubiquitination mediated by RNF25. Expressed in kidney, lung, pancreas and spleen.

The protein localises to the cell membrane. It localises to the cytoplasm. Its subcellular location is the cytoplasmic vesicle. Its function is as follows. Cell autonomous antagonist of the canonical Wnt signaling pathway. May activate a second Wnt signaling pathway that controls planar cell polarity. Required for processing of TGFA and for targeting of TGFA to the basolateral membrane of polarized epithelial cells. This Homo sapiens (Human) protein is Protein naked cuticle homolog 2 (NKD2).